Here is a 201-residue protein sequence, read N- to C-terminus: Large ribosomal subunit protein uL4 (201 aa).

Residues 39–72 are disordered; that stretch reads RRGTASTKTRAQVSKSGKKMYSQKGTGNARHGDR. Positions 42-53 are enriched in polar residues; sequence TASTKTRAQVSK.

The protein belongs to the universal ribosomal protein uL4 family. As to quaternary structure, part of the 50S ribosomal subunit.

In terms of biological role, one of the primary rRNA binding proteins, this protein initially binds near the 5'-end of the 23S rRNA. It is important during the early stages of 50S assembly. It makes multiple contacts with different domains of the 23S rRNA in the assembled 50S subunit and ribosome. Functionally, forms part of the polypeptide exit tunnel. This chain is Large ribosomal subunit protein uL4, found in Deinococcus deserti (strain DSM 17065 / CIP 109153 / LMG 22923 / VCD115).